The following is a 641-amino-acid chain: ATP-dependent zinc metalloprotease FtsH (641 aa).

Residues 1 to 16 (MNKQQKPKRSPLRPDY) are Cytoplasmic-facing. The helical transmembrane segment at 17–37 (LVIVIIILLAIGMYFFFTEMM) threads the bilayer. Topologically, residues 38–131 (APKVKQFDEF…VSFVPHVSVD (94 aa)) are extracellular. The helical transmembrane segment at 132-152 (FWNIISTLLLIAAPIVLVVIM) threads the bilayer. At 153–641 (FRSMSSQSNK…EVEEDSKKSE (489 aa)) the chain is on the cytoplasmic side. Residue 222-229 (GQPGTGKT) coordinates ATP. A Zn(2+)-binding site is contributed by His444. Residue Glu445 is part of the active site. Residues His448 and Asp520 each contribute to the Zn(2+) site.

In the central section; belongs to the AAA ATPase family. This sequence in the C-terminal section; belongs to the peptidase M41 family. Homohexamer. The cofactor is Zn(2+).

The protein localises to the cell membrane. Its function is as follows. Acts as a processive, ATP-dependent zinc metallopeptidase for both cytoplasmic and membrane proteins. Plays a role in the quality control of integral membrane proteins. This Acholeplasma laidlawii (strain PG-8A) protein is ATP-dependent zinc metalloprotease FtsH.